The chain runs to 215 residues: Methylthioribulose-1-phosphate dehydratase (215 aa).

Zn(2+) contacts are provided by H103 and H105.

This sequence belongs to the aldolase class II family. MtnB subfamily. The cofactor is Zn(2+).

The enzyme catalyses 5-(methylsulfanyl)-D-ribulose 1-phosphate = 5-methylsulfanyl-2,3-dioxopentyl phosphate + H2O. The protein operates within amino-acid biosynthesis; L-methionine biosynthesis via salvage pathway; L-methionine from S-methyl-5-thio-alpha-D-ribose 1-phosphate: step 2/6. In terms of biological role, catalyzes the dehydration of methylthioribulose-1-phosphate (MTRu-1-P) into 2,3-diketo-5-methylthiopentyl-1-phosphate (DK-MTP-1-P). The polypeptide is Methylthioribulose-1-phosphate dehydratase (Persephonella marina (strain DSM 14350 / EX-H1)).